The following is a 117-amino-acid chain: MKTVILFSFLLVLLGYLGAGHAQRDPEFTSRARQMLAVFGNSEVDRYTKSRNLPALIEFYEKYSSRLPLTVQDRNFANNVVRRYRAQNNQQVDGVPAQGGIGLAFALLLPFAKAIRE.

Residues 1-22 form the signal peptide; it reads MKTVILFSFLLVLLGYLGAGHA.

It belongs to the Turandot family.

It is found in the secreted. Its function is as follows. A humoral factor that may play a role in stress tolerance. The sequence is that of Protein Turandot F from Drosophila sechellia (Fruit fly).